Consider the following 604-residue polypeptide: Inositol-3-phosphate synthase 1 (604 aa).

NAD(+) contacts are provided by Gly88, Gly89, Asn90, Asn91, Asp163, Ser198, Val199, Gln210, Arg213, Ser251, Gly252, Asn253, Thr254, Ser303, Asp327, Leu328, Thr330, Asn361, Asn362, Asp363, Lys376, Gly456, Asp457, Asp485, and Ser486.

This sequence belongs to the myo-inositol 1-phosphate synthase family. NAD(+) serves as cofactor.

It carries out the reaction D-glucose 6-phosphate = 1D-myo-inositol 3-phosphate. The protein operates within polyol metabolism; myo-inositol biosynthesis; myo-inositol from D-glucose 6-phosphate: step 1/2. Key enzyme in myo-inositol biosynthesis pathway that catalyzes the conversion of glucose 6-phosphate to 1-myo-inositol 1-phosphate in a NAD-dependent manner. Rate-limiting enzyme in the synthesis of all inositol-containing compounds. De novo-synthesized myo-inositol is essential for incorporation into GPI (glycosylphosphatidylinositol) glycolipids during intra-erythrocytic development. This chain is Inositol-3-phosphate synthase 1, found in Plasmodium falciparum (isolate 3D7).